A 125-amino-acid chain; its full sequence is MRLLTHNLLSSHVRGVGPRGFPLRLQATEVRINPVEFNPDFIVRMIPKVEWAALLEAADHLHLIQVPKEPIQGYEHNEEFLRKMHHVLLEVEVLEGTLQCPESGRVFPISRGIPNMLLSDEETET.

The region spanning 2 to 119 is the TRM112 domain; that stretch reads RLLTHNLLSS…SRGIPNMLLS (118 aa). Ser-119 carries the post-translational modification Phosphoserine.

Belongs to the TRM112 family. As to quaternary structure, part of the heterodimeric BUD23-TRM112 methyltransferase complex; this heterodimerization is necessary for the metabolic stability and activity of the catalytic subunit BUD23. Part of the heterodimeric N6AMT1-TRM112 methyltransferase complex; this heterodimerization is necessary for S-adenosyl-L-methionine-binding to N6AMT1/HEMK2. Part of the heterodimeric ALKBH8-TRM112 methyltransferase complex. Part of the heterodimeric METTL5-TRM112 methyltransferase complex; this heterodimerization is necessary for the stability of the catalytic subunit METTL5. Part of the heterodimeric THUMPD3-TRM112 methyltransferase complex; this complex forms an active tRNA methyltransferase, where TRMT112 acts as an activator of the catalytic subunit THUMPD3. Part of the heterodimeric THUMPD2-TRM112 methyltransferase complex; this complex forms an active tRNA methyltransferase, where TRMT112 acts as an activator of the catalytic subunit THUMPD2. Part of the heterodimeric TRMT11-TRM112 methyltransferase complex; this complex forms an active tRNA methyltransferase, where TRMT112 acts as an activator of the catalytic subunit TRMT11.

Its subcellular location is the nucleus. The protein resides in the nucleoplasm. It localises to the cytoplasm. It is found in the perinuclear region. Acts as an activator of both rRNA/tRNA and protein methyltransferases. Together with methyltransferase BUD23, methylates the N(7) position of a guanine in 18S rRNA. The heterodimer with HEMK2/N6AMT1 catalyzes N5-methylation of ETF1 on 'Gln-185', using S-adenosyl L-methionine as methyl donor. The heterodimer with ALKBH8 catalyzes the methylation of 5-carboxymethyl uridine to 5-methylcarboxymethyl uridine at the wobble position of the anticodon loop in target tRNA species. Together with methyltransferase THUMPD3, catalyzes the formation of N(2)-methylguanosine at position 6 in a broad range of tRNA substrates and at position 7 of tRNA(Trp). Involved in the pre-rRNA processing steps leading to small-subunit rRNA production. Together with methyltransferase METTL5, specifically methylates the 6th position of adenine in position 1832 of 18S rRNA. The chain is Multifunctional methyltransferase subunit TRM112-like protein (TRMT112) from Bos taurus (Bovine).